We begin with the raw amino-acid sequence, 351 residues long: Neutral protease 2 homolog MGG_10927 (351 aa).

Positions 1 to 16 are cleaved as a signal peptide; it reads MKFSIGVSLLATLAGA. Residues 17–177 constitute a propeptide that is removed on maturation; the sequence is VNVDMAKRDT…AAFLAKRTIV (161 aa). Cystine bridges form between C181–C253 and C260–C278. Residue H303 coordinates Zn(2+). The active site involves E304. H307 is a binding site for Zn(2+).

Belongs to the peptidase M35 family. Zn(2+) is required as a cofactor.

The protein resides in the secreted. The catalysed reaction is Preferential cleavage of bonds with hydrophobic residues in P1'. Also 3-Asn-|-Gln-4 and 8-Gly-|-Ser-9 bonds in insulin B chain.. In terms of biological role, secreted metalloproteinase that allows assimilation of proteinaceous substrates. Shows high activities on basic nuclear substrates such as histone and protamine. The chain is Neutral protease 2 homolog MGG_10927 from Colletotrichum graminicola (strain M1.001 / M2 / FGSC 10212) (Maize anthracnose fungus).